Consider the following 496-residue polypeptide: Ammonium transporter 1 member 2 (496 aa).

11 helical membrane-spanning segments follow: residues 39–59 (LLFS…LCAG), 74–94 (VLDA…FAFG), 120–140 (FFLF…GSIA), 148–168 (YLIY…HWIW), 192–212 (FAGS…GALI), 236–256 (LVVL…PGSF), 274–296 (SAVG…TTLF), 307–327 (VIDV…GCSV), 331–351 (WAAI…NALA), 360–380 (LEAA…TALF), and 412–432 (IVVI…LFLV).

This sequence belongs to the ammonia transporter channel (TC 1.A.11.2) family. As to expression, expressed in exodermis, sclerenchyma, endodermis and pericycle cells of primary root tips.

The protein localises to the membrane. In terms of biological role, ammonium transporter probably involved in ammonium uptake from the soil and ammonium uptake and retrieval in the vascular system. The sequence is that of Ammonium transporter 1 member 2 (AMT1-2) from Oryza sativa subsp. japonica (Rice).